We begin with the raw amino-acid sequence, 317 residues long: Ribosomal protein L11 methyltransferase (317 aa).

4 residues coordinate S-adenosyl-L-methionine: threonine 158, glycine 179, aspartate 201, and asparagine 244.

Belongs to the methyltransferase superfamily. PrmA family.

Its subcellular location is the cytoplasm. The catalysed reaction is L-lysyl-[protein] + 3 S-adenosyl-L-methionine = N(6),N(6),N(6)-trimethyl-L-lysyl-[protein] + 3 S-adenosyl-L-homocysteine + 3 H(+). Functionally, methylates ribosomal protein L11. This is Ribosomal protein L11 methyltransferase from Streptococcus pyogenes serotype M18 (strain MGAS8232).